A 352-amino-acid chain; its full sequence is V-type ATP synthase subunit C (352 aa).

Belongs to the V-ATPase V0D/AC39 subunit family.

Its function is as follows. Produces ATP from ADP in the presence of a proton gradient across the membrane. The protein is V-type ATP synthase subunit C (atpC) of Deinococcus radiodurans (strain ATCC 13939 / DSM 20539 / JCM 16871 / CCUG 27074 / LMG 4051 / NBRC 15346 / NCIMB 9279 / VKM B-1422 / R1).